Consider the following 150-residue polypeptide: Guanine nucleotide-binding protein subunit gamma 2 (150 aa).

Residues 1-11 (MRGEANGEEEQ) are compositionally biased toward acidic residues. A disordered region spans residues 1–59 (MRGEANGEEEQQPPRRNHLRDDAEEEEEVERRAARPVSGQQQQQQRRRPTDVGGGAAMR). Residues 65-97 (GKHRLSAAIARLDQELQSLQDELNELETMEPAS) are a coiled coil. The 67-residue stretch at 71–137 (AAIARLDQEL…RWFQRVRSSR (67 aa)) folds into the G protein gamma domain.

G proteins are composed of 3 units, alpha, beta and gamma. Interacts with the beta subunit RGB1.

The protein localises to the cell membrane. In terms of biological role, guanine nucleotide-binding proteins (G proteins) are involved as modulators or transducers in various transmembrane signaling systems. The sequence is that of Guanine nucleotide-binding protein subunit gamma 2 from Oryza sativa subsp. indica (Rice).